The sequence spans 278 residues: Thioredoxin-related transmembrane protein 1 (278 aa).

The signal sequence occupies residues 1 to 26 (MAPSGSLRIPVAVLLLLLWGAPWAHG). Residues 27–132 (KRSDVRIITD…FINFISDKEW (106 aa)) form the Thioredoxin domain. Residues 27-180 (KRSDVRIITD…EDLGLPIWGS (154 aa)) lie on the Extracellular side of the membrane. Catalysis depends on nucleophile residues C56 and C59. Cysteines 56 and 59 form a disulfide. Residues 181 to 203 (YTVFALATLLSGLLLGLFMIFVA) traverse the membrane as a helical segment. The Cytoplasmic portion of the chain corresponds to 204–278 (DCLCPSKRRR…VGPSLATDKS (75 aa)). S-palmitoyl cysteine attachment occurs at residues C205 and C207. A disordered region spans residues 213–278 (RPQPYPSRKL…VGPSLATDKS (66 aa)). S226, S245, S268, S272, and S278 each carry phosphoserine. Over residues 235-250 (EEQEADVEDVSEEESE) the composition is skewed to acidic residues.

In terms of assembly, interacts with ATP2A2. In terms of processing, palmitoylated; palmitoylation is required for localization to mitochondria-associated endoplasmic reticulum membrane (MAM).

Its subcellular location is the endoplasmic reticulum membrane. The protein localises to the mitochondrion membrane. It is found in the secreted. The enzyme catalyses Catalyzes the rearrangement of -S-S- bonds in proteins.. In terms of biological role, thiredoxin domain-containing protein that participates in various redox reactions through the reversible oxidation of its active center dithiol to a disulfide and catalyze dithiol-disulfide exchange reactions. Acts as a key inhibitor of the alternative triglyceride biosynthesis pathway by inhibiting the activity of TMEM68/DIESL at the endoplasmic reticulum, thereby restricting accumulation of triacylglycerol. The alternative triglyceride biosynthesis pathway mediates formation of triacylglycerol from diacylglycerol and membrane phospholipids. Acts as a protein disulfide isomerase by catalyzing formation or reduction of disulfide bonds. Specifically mediates formation of disulfide bonds of transmembrane proteins at the endoplasmic reticulum membrane. Involved in endoplasmic reticulum-associated degradation (ERAD) via its protein disulfide isomerase activity by acting on folding-defective polypeptides at the endoplasmic reticulum membrane. Acts as a negative regulator of platelet aggregation following secretion in the extracellular space. Acts as a regulator of endoplasmic reticulum-mitochondria contact sites via its ability to regulate redox signals. Regulates endoplasmic reticulum-mitochondria Ca(2+) flux. The chain is Thioredoxin-related transmembrane protein 1 (TMX1) from Bos taurus (Bovine).